The sequence spans 473 residues: Calcium/calmodulin-dependent protein kinase type IV (473 aa).

Phosphoserine; by autocatalysis is present on residues Ser12 and Ser13. The 255-residue stretch at 46–300 (FEVESELGRG…TFQALQHPWV (255 aa)) folds into the Protein kinase domain. ATP-binding positions include 52-60 (LGRGATSIV) and Lys75. An O-linked (GlcNAc) threonine glycan is attached at Thr57. Ser58 carries O-linked (GlcNAc) serine glycosylation. Ser137 is a glycosylation site (O-linked (GlcNAc) serine). The active-site Proton acceptor is Asp164. An O-linked (GlcNAc) serine glycan is attached at Ser189. A Phosphothreonine; by CaMKK1 and CaMKK2 modification is found at Thr200. An autoinhibitory domain region spans residues 305–321 (ANFVHMDTAQKKLQEFN). The segment at 306 to 323 (NFVHMDTAQKKLQEFNAR) is PP2A-binding. Positions 322–341 (ARRKLKAAVKAVVASSRLGS) are calmodulin-binding. A Phosphoserine; by autocatalysis modification is found at Ser336. Residue Ser341 is modified to Phosphoserine. Over residues 341–350 (SASSSHGSIQ) the composition is skewed to low complexity. Disordered regions lie at residues 341–368 (SASS…GNED) and 445–473 (EEAA…LPEY). O-linked (GlcNAc) serine glycans are attached at residues Ser344, Ser345, and Ser356. At Ser360 the chain carries Phosphoserine.

It belongs to the protein kinase superfamily. CAMK Ser/Thr protein kinase family. CaMK subfamily. As to quaternary structure, monomer. Interacts with protein phosphatase 2A (PPP2CA/PPP2CB); the interaction is mutually exclusive with binding to Ca(2+)/calmodulin. In terms of processing, phosphorylated by CaMKK1 and CaMKK2 on Thr-200. Dephosphorylated by protein phosphatase 2A. Autophosphorylated on Ser-12 and Ser-13. Glycosylation at Ser-189 modulates the phosphorylation of CaMK4 at Thr-200 and negatively regulates its activity toward CREB1 in basal conditions and during early inomycin stimulation. In terms of tissue distribution, expressed in brain, thymus, CD4 T-cells, testis and epithelial ovarian cancer tissue.

Its subcellular location is the cytoplasm. The protein localises to the nucleus. The catalysed reaction is L-seryl-[protein] + ATP = O-phospho-L-seryl-[protein] + ADP + H(+). The enzyme catalyses L-threonyl-[protein] + ATP = O-phospho-L-threonyl-[protein] + ADP + H(+). Its activity is regulated as follows. Activated by Ca(2+)/calmodulin. Binding of calmodulin results in conformational change that relieves intrasteric autoinhibition and allows phosphorylation of Thr-200 within the activation loop by CaMKK1 or CaMKK2. Phosphorylation of Thr-200 results in a 10-20-fold increase in total activity to generate Ca(2+)/calmodulin-independent activity. Autophosphorylation of the N-terminus Ser-12 and Ser-13 is required for full activation. Inactivated by protein phosphatase 2A (PPP2CA/PPP2CB) which dephosphorylates Thr-200, thereby terminating autonomous activity and helping to maintain the enzyme in its autoinhibited state. Calcium/calmodulin-dependent protein kinase that operates in the calcium-triggered CaMKK-CaMK4 signaling cascade and regulates, mainly by phosphorylation, the activity of several transcription activators, such as CREB1, MEF2D, JUN and RORA, which play pivotal roles in immune response, inflammation, and memory consolidation. In the thymus, regulates the CD4(+)/CD8(+) double positive thymocytes selection threshold during T-cell ontogeny. In CD4 memory T-cells, is required to link T-cell antigen receptor (TCR) signaling to the production of IL2, IFNG and IL4 (through the regulation of CREB and MEF2). Regulates the differentiation and survival phases of osteoclasts and dendritic cells (DCs). Mediates DCs survival by linking TLR4 and the regulation of temporal expression of BCL2. Phosphorylates the transcription activator CREB1 on 'Ser-133' in hippocampal neuron nuclei and contribute to memory consolidation and long term potentiation (LTP) in the hippocampus. Can activate the MAP kinases MAPK1/ERK2, MAPK8/JNK1 and MAPK14/p38 and stimulate transcription through the phosphorylation of ELK1 and ATF2. Can also phosphorylate in vitro CREBBP, PRM2, MEF2A and STMN1/OP18. This chain is Calcium/calmodulin-dependent protein kinase type IV (CAMK4), found in Homo sapiens (Human).